The sequence spans 263 residues: LIM and SH3 domain protein 1 (263 aa).

Position 1 is an N-acetylmethionine (M1). Residues 5–56 (CARCGKIVYPTEKVNCLDKYWHKACFHCETCKMTLNMKNYKGYEKKPYCNAH) enclose the LIM zinc-binding domain. At K42 the chain carries N6-acetyllysine. 2 Nebulin repeats span residues 61-95 (SFTM…KNKG) and 97-131 (GFSV…KSRM). The residue at position 68 (T68) is a Phosphothreonine. Position 75 is an N6-methyllysine (K75). A Phosphoserine modification is found at S99. T104 carries the post-translational modification Phosphothreonine. Position 112 is an N6-succinyllysine (K112). Phosphoserine is present on residues S118 and S134. The interval 123–207 (HEEFEKSRMG…QRSAPGGGGK (85 aa)) is disordered. Polar residues predominate over residues 148-162 (DSSSYRRPTEQQQPQ). Phosphothreonine; by PKA is present on T156. The region spanning 204–263 (GGGKRYRAVYDYSAADEDEVSFQDGDTIVNVQQIDDGWMYGTVERTGDTGMLPANYVEAI) is the SH3 domain.

As to quaternary structure, interacts with F-actin. Interacts with KBTBD10. Interacts with ANKRD54.

It localises to the cytoplasm. The protein localises to the cell cortex. It is found in the cytoskeleton. Plays an important role in the regulation of dynamic actin-based, cytoskeletal activities. Agonist-dependent changes in LASP1 phosphorylation may also serve to regulate actin-associated ion transport activities, not only in the parietal cell but also in certain other F-actin-rich secretory epithelial cell types. This chain is LIM and SH3 domain protein 1 (Lasp1), found in Mus musculus (Mouse).